A 263-amino-acid chain; its full sequence is Acyl-[acyl-carrier-protein]--UDP-N-acetylglucosamine O-acyltransferase (263 aa).

It belongs to the transferase hexapeptide repeat family. LpxA subfamily. In terms of assembly, homotrimer.

It localises to the cytoplasm. The catalysed reaction is a (3R)-hydroxyacyl-[ACP] + UDP-N-acetyl-alpha-D-glucosamine = a UDP-3-O-[(3R)-3-hydroxyacyl]-N-acetyl-alpha-D-glucosamine + holo-[ACP]. Its pathway is glycolipid biosynthesis; lipid IV(A) biosynthesis; lipid IV(A) from (3R)-3-hydroxytetradecanoyl-[acyl-carrier-protein] and UDP-N-acetyl-alpha-D-glucosamine: step 1/6. In terms of biological role, involved in the biosynthesis of lipid A, a phosphorylated glycolipid that anchors the lipopolysaccharide to the outer membrane of the cell. This chain is Acyl-[acyl-carrier-protein]--UDP-N-acetylglucosamine O-acyltransferase, found in Campylobacter jejuni subsp. doylei (strain ATCC BAA-1458 / RM4099 / 269.97).